We begin with the raw amino-acid sequence, 367 residues long: Glutamate 5-kinase (367 aa).

K10 lines the ATP pocket. Substrate is bound by residues S50, D137, and N149. Residues 169–170 and 211–217 each bind ATP; these read TD and TGGMSTK. The region spanning 275–353 is the PUA domain; sequence AGEITVDEGA…QEIDAILGYE (79 aa).

This sequence belongs to the glutamate 5-kinase family.

The protein resides in the cytoplasm. The catalysed reaction is L-glutamate + ATP = L-glutamyl 5-phosphate + ADP. The protein operates within amino-acid biosynthesis; L-proline biosynthesis; L-glutamate 5-semialdehyde from L-glutamate: step 1/2. In terms of biological role, catalyzes the transfer of a phosphate group to glutamate to form L-glutamate 5-phosphate. This Shigella flexneri protein is Glutamate 5-kinase.